We begin with the raw amino-acid sequence, 251 residues long: tRNA-cytidine(32) 2-sulfurtransferase 2 (251 aa).

Residues 33–38 carry the PP-loop motif motif; sequence SGGKDS. Cys-108, Cys-111, and Cys-199 together coordinate [4Fe-4S] cluster.

The protein belongs to the TtcA family. In terms of assembly, homodimer. Mg(2+) serves as cofactor. Requires [4Fe-4S] cluster as cofactor.

The protein localises to the cytoplasm. It carries out the reaction cytidine(32) in tRNA + S-sulfanyl-L-cysteinyl-[cysteine desulfurase] + AH2 + ATP = 2-thiocytidine(32) in tRNA + L-cysteinyl-[cysteine desulfurase] + A + AMP + diphosphate + H(+). Its pathway is tRNA modification. In terms of biological role, catalyzes the ATP-dependent 2-thiolation of cytidine in position 32 of tRNA, to form 2-thiocytidine (s(2)C32). The sulfur atoms are provided by the cysteine/cysteine desulfurase (IscS) system. In Francisella tularensis subsp. tularensis (strain WY96-3418), this protein is tRNA-cytidine(32) 2-sulfurtransferase 2.